The primary structure comprises 206 residues: Small ribosomal subunit protein uS4 (206 aa).

The segment at 28 to 48 is disordered; it reads YMERRPYGPGEHGRARKKQDS. The S4 RNA-binding domain maps to 95–160; that stretch reads MRLDALVLRA…MPPFQVAAAG (66 aa).

The protein belongs to the universal ribosomal protein uS4 family. Part of the 30S ribosomal subunit. Contacts protein S5. The interaction surface between S4 and S5 is involved in control of translational fidelity.

In terms of biological role, one of the primary rRNA binding proteins, it binds directly to 16S rRNA where it nucleates assembly of the body of the 30S subunit. With S5 and S12 plays an important role in translational accuracy. This chain is Small ribosomal subunit protein uS4, found in Paenarthrobacter aurescens (strain TC1).